A 91-amino-acid polypeptide reads, in one-letter code: Protein LURE 1.3 (91 aa).

An N-terminal signal peptide occupies residues 1–20; that stretch reads MKLPFIFLITLLIFVSSCTS. N-linked (GlcNAc...) asparagine glycosylation occurs at Asn-24. 3 disulfide bridges follow: Cys-59/Cys-76, Cys-62/Cys-83, and Cys-66/Cys-85. Residues 68–88 form a PRK6 binding region; the sequence is RRGKYIRTCSFERKLCRCSIS.

The protein belongs to the DEFL family. As to quaternary structure, binds to PRK6 LRRs. Expressed in the pistil. Detected exclusively in the synergid cells.

Its subcellular location is the secreted. Its function is as follows. Pollen tube attractants guiding pollen tubes to the ovular micropyle. Attracts pollen tubes from both A.thaliana and A.lyrata. The protein is Protein LURE 1.3 of Arabidopsis thaliana (Mouse-ear cress).